The following is a 218-amino-acid chain: Small ribosomal subunit protein uS3c (218 aa).

Residues 47–118 (VQKHMRISSG…RLNIAIARVA (72 aa)) enclose the KH type-2 domain.

Belongs to the universal ribosomal protein uS3 family. Part of the 30S ribosomal subunit.

Its subcellular location is the plastid. The protein localises to the chloroplast. The protein is Small ribosomal subunit protein uS3c (rps3) of Nymphaea alba (White water-lily).